The chain runs to 542 residues: ATP synthase subunit beta (542 aa).

Over residues 1 to 50 the composition is skewed to low complexity; it reads MAKTPAKAPAAAAKPAAVKKPAAPKAAAAPKAAAVATPAAKKPAAPKAAP. Positions 1 to 61 are disordered; sequence MAKTPAKAPA…SKVAGTREKP (61 aa). 216-223 serves as a coordination point for ATP; sequence GGAGVGKT.

It belongs to the ATPase alpha/beta chains family. As to quaternary structure, F-type ATPases have 2 components, CF(1) - the catalytic core - and CF(0) - the membrane proton channel. CF(1) has five subunits: alpha(3), beta(3), gamma(1), delta(1), epsilon(1). CF(0) has three main subunits: a(1), b(2) and c(9-12). The alpha and beta chains form an alternating ring which encloses part of the gamma chain. CF(1) is attached to CF(0) by a central stalk formed by the gamma and epsilon chains, while a peripheral stalk is formed by the delta and b chains.

The protein localises to the cell inner membrane. It carries out the reaction ATP + H2O + 4 H(+)(in) = ADP + phosphate + 5 H(+)(out). In terms of biological role, produces ATP from ADP in the presence of a proton gradient across the membrane. The catalytic sites are hosted primarily by the beta subunits. The polypeptide is ATP synthase subunit beta (Caulobacter sp. (strain K31)).